A 261-amino-acid polypeptide reads, in one-letter code: Small ribosomal subunit protein uS2 (261 aa).

The tract at residues 224 to 261 (GRQGEDDEAVQQEEVAEGVSKDSLEDLKKTVEEGSNEE) is disordered. The span at 228–239 (EDDEAVQQEEVA) shows a compositional bias: acidic residues. Basic and acidic residues predominate over residues 242–255 (VSKDSLEDLKKTVE).

Belongs to the universal ribosomal protein uS2 family.

The polypeptide is Small ribosomal subunit protein uS2 (rpsB) (Pediococcus acidilactici).